The chain runs to 214 residues: MENTDQNIEITAETSAAAENTESTSLVPIDEYLAAGVHIGTQQKTQNMMKFVYRVRTDGLYVLDIQSTDERIRSIAHFLSMYDPSRILVVSARQYGQYPATMFSKSVGAVSKVGRFIPGSLTNPVQEGFFEPDVVIVTDPAGDAQVIREAVNVGIPVVALCDTNNMTSNVDLVIPTNNKGRKALSLVYWLLAREIANERDIPFNYEASEFETGL.

The protein belongs to the universal ribosomal protein uS2 family.

This is Small ribosomal subunit protein uS2 from Methanococcoides burtonii (strain DSM 6242 / NBRC 107633 / OCM 468 / ACE-M).